Here is a 100-residue protein sequence, read N- to C-terminus: Small ribosomal subunit protein uS14c (100 aa).

The protein belongs to the universal ribosomal protein uS14 family. As to quaternary structure, part of the 30S ribosomal subunit.

The protein resides in the plastid. Its subcellular location is the chloroplast. Functionally, binds 16S rRNA, required for the assembly of 30S particles. The protein is Small ribosomal subunit protein uS14c of Cycas taitungensis (Prince sago).